Consider the following 924-residue polypeptide: Exocyst complex component 2 (924 aa).

The IPT/TIG domain occupies 8–93; the sequence is PLVTGISPNE…GTSTVSFKLL (86 aa). The stretch at 240–260 forms a coiled coil; it reads QKLENVLNRASNTADTLFQEV. 3 positions are modified to phosphoserine: S431, S432, and S435. Phosphothreonine is present on T440. Position 454 is an N6-acetyllysine (K454).

It belongs to the SEC5 family. In terms of assembly, the exocyst complex is composed of EXOC1, EXOC2, EXOC3, EXOC4, EXOC5, EXOC6, EXOC7 and EXOC8. Interacts with EXOC3L1. Interacts with GNEFR/DELGEF; this interaction occurs only in the presence of magnesium or manganese and is stimulated by dCTP or GTP. Interacts with RALA and RALB. Interacts with ARL13B; regulates ARL13B localization to the cilium membrane.

The protein localises to the midbody. Its subcellular location is the midbody ring. In terms of biological role, component of the exocyst complex involved in the docking of exocytic vesicles with fusion sites on the plasma membrane. This Mus musculus (Mouse) protein is Exocyst complex component 2 (Exoc2).